Here is a 440-residue protein sequence, read N- to C-terminus: MQVKIEEISSVKRRISVEVPAERVNTEIEKSFAGIQKKATLAGFRKGKAPLQMVKKFYRNAMQDEVMRRLYEQTLFPALDEHKLEPVDAPMIDDIALVEEGTPFKYSALIEIMPQILLGEYKGLQVKKERYVADEKAVEGEIERMRENMAQLAPVEEGTVEKGMVLTVDFSFAVPGYPEEETSGKDASVEVGNGRLLPGLEEGLIGMALGETKDITVTMPDDNPNKELAGKPGVFTVTLKEIKKKELPELNDEFAQQFGDFETIADMRTKLTEMREQQELERIKTDLKTRIIDALIEKNPLEVPDSMVRRQTDFMLENLKNRLKGQNMSLEMMGLDEDGYRQRFWGEAAQKVKGGLLVMALVEQENIAVEEADLEARYAQIAAGNEDMLSRIKEFYAAQANARNSMVAEIKEDKAIAFLLENAVVTEVEAAELNAPVAGE.

Residues 163–248 (GMVLTVDFSF…LKEIKKKELP (86 aa)) form the PPIase FKBP-type domain.

Belongs to the FKBP-type PPIase family. Tig subfamily.

The protein resides in the cytoplasm. It catalyses the reaction [protein]-peptidylproline (omega=180) = [protein]-peptidylproline (omega=0). Functionally, involved in protein export. Acts as a chaperone by maintaining the newly synthesized protein in an open conformation. Functions as a peptidyl-prolyl cis-trans isomerase. This Trichlorobacter lovleyi (strain ATCC BAA-1151 / DSM 17278 / SZ) (Geobacter lovleyi) protein is Trigger factor.